The chain runs to 585 residues: PiggyBac transposable element-derived protein 4 (585 aa).

Residues 1 to 73 (MSNPRKRSIP…STSSDSGRSM (73 aa)) are disordered. Residues 25–40 (DSFDESDFSEIDDSDN) show a composition bias toward acidic residues. A compositionally biased stretch (basic and acidic residues) spans 47 to 61 (EADKIRPLSHLESDG). Over residues 62-72 (KSSTSSDSGRS) the composition is skewed to low complexity.

The polypeptide is PiggyBac transposable element-derived protein 4 (PGBD4) (Homo sapiens (Human)).